The primary structure comprises 326 residues: GTP 3',8-cyclase (326 aa).

The Radical SAM core domain occupies 7 to 232 (GFGRSFPYLR…PRAADAGPAR (226 aa)). Arginine 16 is a binding site for GTP. Residues cysteine 23 and cysteine 27 each coordinate [4Fe-4S] cluster. Tyrosine 29 lines the S-adenosyl-L-methionine pocket. Cysteine 30 is a [4Fe-4S] cluster binding site. Arginine 65 contacts GTP. S-adenosyl-L-methionine is bound at residue glycine 69. Threonine 96 lines the GTP pocket. Residue serine 120 coordinates S-adenosyl-L-methionine. Residue lysine 157 coordinates GTP. Methionine 191 contacts S-adenosyl-L-methionine. Residues cysteine 254 and cysteine 257 each coordinate [4Fe-4S] cluster. 259–261 (RLR) is a GTP binding site. Residue cysteine 271 coordinates [4Fe-4S] cluster.

The protein belongs to the radical SAM superfamily. MoaA family. Monomer and homodimer. [4Fe-4S] cluster is required as a cofactor.

The catalysed reaction is GTP + AH2 + S-adenosyl-L-methionine = (8S)-3',8-cyclo-7,8-dihydroguanosine 5'-triphosphate + 5'-deoxyadenosine + L-methionine + A + H(+). It participates in cofactor biosynthesis; molybdopterin biosynthesis. Its function is as follows. Catalyzes the cyclization of GTP to (8S)-3',8-cyclo-7,8-dihydroguanosine 5'-triphosphate. This chain is GTP 3',8-cyclase, found in Stenotrophomonas maltophilia (strain K279a).